Reading from the N-terminus, the 436-residue chain is 2-(3-amino-3-carboxypropyl)histidine synthase subunit 1 (436 aa).

Residues methionine 1–serine 27 are disordered. The segment covering serine 7–arginine 19 has biased composition (basic residues). Cysteine 130, cysteine 239, and cysteine 368 together coordinate [4Fe-4S] cluster. The interval proline 417–serine 436 is disordered. Basic residues predominate over residues proline 426–serine 436.

This sequence belongs to the DPH1/DPH2 family. DPH1 subfamily. Component of the 2-(3-amino-3-carboxypropyl)histidine synthase complex composed of dph1, dph2, dph3 and a NADH-dependent reductase, predominantly cbr1. The cofactor is [4Fe-4S] cluster.

It is found in the cytoplasm. The catalysed reaction is L-histidyl-[translation elongation factor 2] + S-adenosyl-L-methionine = 2-[(3S)-amino-3-carboxypropyl]-L-histidyl-[translation elongation factor 2] + S-methyl-5'-thioadenosine + H(+). It participates in protein modification; peptidyl-diphthamide biosynthesis. Catalyzes the first step of diphthamide biosynthesis, a post-translational modification of histidine which occurs in elongation factor 2. Dph1 and dph2 transfer a 3-amino-3-carboxypropyl (ACP) group from S-adenosyl-L-methionine (SAM) to a histidine residue, the reaction is assisted by a reduction system comprising dph3 and a NADH-dependent reductase, predominantly cbr1. In Schizosaccharomyces pombe (strain 972 / ATCC 24843) (Fission yeast), this protein is 2-(3-amino-3-carboxypropyl)histidine synthase subunit 1 (dph1).